The following is a 287-amino-acid chain: mRNA-capping enzyme regulatory subunit OPG124 (287 aa).

Belongs to the orthopoxvirus mRNA-capping enzyme regulatory subunit family. In terms of assembly, interacts with the catalytic subunit OPG113.

The protein localises to the virion. In terms of biological role, regulatory subunit of the mRNA cap enzyme which stabilizes the catalytic subunit and enhances its methyltransferase activity through an allosteric mechanism. Heterodimeric mRNA capping enzyme catalyzes the linkage of a N7-methyl-guanosine moiety to the first transcribed nucleotide (cap 0 structure), whereas the methyltransferase OPG102 is responsible for a second methylation at the 2'-O position of the ribose (cap 1 structure). Also involved in early viral gene transcription termination and intermediate viral gene transcription initiation. Early gene transcription termination requires the termination factor VTF, the DNA-dependent ATPase NPH-I/OPG123 and the RAP94/OPG109 subunit of the viral RNA polymerase, as well as the presence of a specific termination motif. Binds, together with RAP94/OPG109, to the termination motif 5'-UUUUUNU-3' in the nascent early mRNA. This is mRNA-capping enzyme regulatory subunit OPG124 (OPG124) from Variola virus (isolate Human/India/Ind3/1967) (VARV).